The sequence spans 304 residues: MSYRGLTILGCSSQQPTRHRNHGAYLLRWNGEGLLFDPGEGTQRQFIYANIAPTVVSRIFISHFHGDHCLGLGSMLMRLNLDKVSHPIHCYYPASGKKYFDRLRYSTIYHETIKVVEHPISSEGIVEDFGNFRIEARQLDHLVDTLGWRITEPDTTKFISEKIKAAGLKGPIMQELINKGIIKVNNNIIRLEDVSYTRKGDSIAVVADSLPCQAIVDLAKNARILLCESTYLEEHAHLAKNHYHMTAKQAAEQAKRAEAQQLILTHFSARYNTTEQFVQEAGEIFPNVFAAEEFCSYEFPKNAN.

Histidine 63, histidine 65, aspartate 67, histidine 68, histidine 141, aspartate 208, and histidine 266 together coordinate Zn(2+). The Proton acceptor role is filled by aspartate 67.

It belongs to the RNase Z family. In terms of assembly, homodimer. Zn(2+) serves as cofactor.

The enzyme catalyses Endonucleolytic cleavage of RNA, removing extra 3' nucleotides from tRNA precursor, generating 3' termini of tRNAs. A 3'-hydroxy group is left at the tRNA terminus and a 5'-phosphoryl group is left at the trailer molecule.. Functionally, zinc phosphodiesterase, which displays some tRNA 3'-processing endonuclease activity. Probably involved in tRNA maturation, by removing a 3'-trailer from precursor tRNA. This Chlamydia muridarum (strain MoPn / Nigg) protein is Ribonuclease Z.